The sequence spans 346 residues: Dihydroorotate dehydrogenase (quinone) (346 aa).

FMN is bound by residues alanine 62–lysine 66 and threonine 86. Lysine 66 contributes to the substrate binding site. Asparagine 111–phenylalanine 115 lines the substrate pocket. FMN-binding residues include asparagine 142 and asparagine 175. Asparagine 175 serves as a coordination point for substrate. The Nucleophile role is filled by serine 178. Residue asparagine 180 participates in substrate binding. FMN-binding residues include lysine 211 and valine 239. Asparagine 240 to threonine 241 serves as a coordination point for substrate. Residues glycine 261, glycine 289, and tyrosine 310–threonine 311 each bind FMN.

It belongs to the dihydroorotate dehydrogenase family. Type 2 subfamily. Monomer. Requires FMN as cofactor.

The protein resides in the cell membrane. The catalysed reaction is (S)-dihydroorotate + a quinone = orotate + a quinol. Its pathway is pyrimidine metabolism; UMP biosynthesis via de novo pathway; orotate from (S)-dihydroorotate (quinone route): step 1/1. Its function is as follows. Catalyzes the conversion of dihydroorotate to orotate with quinone as electron acceptor. The protein is Dihydroorotate dehydrogenase (quinone) of Thermus thermophilus (strain ATCC BAA-163 / DSM 7039 / HB27).